Reading from the N-terminus, the 254-residue chain is 3-deoxy-manno-octulosonate cytidylyltransferase (254 aa).

It belongs to the KdsB family.

It localises to the cytoplasm. It carries out the reaction 3-deoxy-alpha-D-manno-oct-2-ulosonate + CTP = CMP-3-deoxy-beta-D-manno-octulosonate + diphosphate. The protein operates within nucleotide-sugar biosynthesis; CMP-3-deoxy-D-manno-octulosonate biosynthesis; CMP-3-deoxy-D-manno-octulosonate from 3-deoxy-D-manno-octulosonate and CTP: step 1/1. It functions in the pathway bacterial outer membrane biogenesis; lipopolysaccharide biosynthesis. Functionally, activates KDO (a required 8-carbon sugar) for incorporation into bacterial lipopolysaccharide in Gram-negative bacteria. In Pseudomonas syringae pv. tomato (strain ATCC BAA-871 / DC3000), this protein is 3-deoxy-manno-octulosonate cytidylyltransferase.